Here is a 349-residue protein sequence, read N- to C-terminus: UDP-3-O-acylglucosamine N-acyltransferase (349 aa).

The Proton acceptor role is filled by His-246.

The protein belongs to the transferase hexapeptide repeat family. LpxD subfamily. In terms of assembly, homotrimer.

It carries out the reaction a UDP-3-O-[(3R)-3-hydroxyacyl]-alpha-D-glucosamine + a (3R)-hydroxyacyl-[ACP] = a UDP-2-N,3-O-bis[(3R)-3-hydroxyacyl]-alpha-D-glucosamine + holo-[ACP] + H(+). The protein operates within bacterial outer membrane biogenesis; LPS lipid A biosynthesis. In terms of biological role, catalyzes the N-acylation of UDP-3-O-acylglucosamine using 3-hydroxyacyl-ACP as the acyl donor. Is involved in the biosynthesis of lipid A, a phosphorylated glycolipid that anchors the lipopolysaccharide to the outer membrane of the cell. The sequence is that of UDP-3-O-acylglucosamine N-acyltransferase from Trichormus variabilis (strain ATCC 29413 / PCC 7937) (Anabaena variabilis).